Reading from the N-terminus, the 511-residue chain is GMP synthase [glutamine-hydrolyzing] (511 aa).

In terms of domain architecture, Glutamine amidotransferase type-1 spans 5 to 195 (AILVLDFGSQ…VFKICQAQIN (191 aa)). Residue C82 is the Nucleophile of the active site. Active-site residues include H169 and E171. Positions 196 to 386 (WSLEGNLETI…LGIKKESLYR (191 aa)) constitute a GMPS ATP-PPase domain. 223 to 229 (SGGTDSL) is a binding site for ATP.

As to quaternary structure, homodimer.

It catalyses the reaction XMP + L-glutamine + ATP + H2O = GMP + L-glutamate + AMP + diphosphate + 2 H(+). It functions in the pathway purine metabolism; GMP biosynthesis; GMP from XMP (L-Gln route): step 1/1. In terms of biological role, catalyzes the synthesis of GMP from XMP. The sequence is that of GMP synthase [glutamine-hydrolyzing] (guaA) from Borreliella burgdorferi (strain ATCC 35210 / DSM 4680 / CIP 102532 / B31) (Borrelia burgdorferi).